A 185-amino-acid chain; its full sequence is Large ribosomal subunit protein bL12c (185 aa).

A chloroplast-targeting transit peptide spans 1–47; sequence MASTALSSAFSLLSLPSSSSPAAAAAAAPRSFAVPSRARPRRAVAVV.

It belongs to the bacterial ribosomal protein bL12 family.

Its subcellular location is the plastid. It is found in the chloroplast. This is Large ribosomal subunit protein bL12c (RPL12-2) from Oryza sativa subsp. japonica (Rice).